The chain runs to 336 residues: tRNA N6-adenosine threonylcarbamoyltransferase (336 aa).

3 residues coordinate Fe cation: histidine 115, histidine 119, and tyrosine 136. Substrate contacts are provided by residues 136–140 (YVAGG), aspartate 168, glutamate 185, and serine 266. Aspartate 294 provides a ligand contact to Fe cation.

Belongs to the KAE1 / TsaD family. The cofactor is Fe(2+).

Its subcellular location is the cytoplasm. It catalyses the reaction L-threonylcarbamoyladenylate + adenosine(37) in tRNA = N(6)-L-threonylcarbamoyladenosine(37) in tRNA + AMP + H(+). Its function is as follows. Required for the formation of a threonylcarbamoyl group on adenosine at position 37 (t(6)A37) in tRNAs that read codons beginning with adenine. Is probably involved in the transfer of the threonylcarbamoyl moiety of threonylcarbamoyl-AMP (TC-AMP) to the N6 group of A37. This is tRNA N6-adenosine threonylcarbamoyltransferase from Thermofilum pendens (strain DSM 2475 / Hrk 5).